The sequence spans 981 residues: Ephrin type-A receptor 3 (981 aa).

The first 20 residues, 1–20, serve as a signal peptide directing secretion; it reads MALFRIYSFLAPFHILVLCQ. Residues 21 to 545 lie on the Extracellular side of the membrane; the sequence is ALRNYPDNEV…LAVGDPNQQT (525 aa). Residues 29 to 210 form the Eph LBD domain; the sequence is EVTLLDSMSA…FYKRCPLAVL (182 aa). 2 consecutive Fibronectin type-III domains span residues 328 to 441 and 442 to 533; these read PPSA…TSQT and VSVI…TSHE. 4 N-linked (GlcNAc...) asparagine glycosylation sites follow: N340, N410, N435, and N485. A helical membrane pass occupies residues 546-566; that stretch reads ILAISVAGGAVLLVLLVACFI. Over 567-981 the chain is Cytoplasmic; that stretch reads VSGRRCGYIK…QAHHGTQVQV (415 aa). 2 positions are modified to phosphotyrosine; by autocatalysis: Y601 and Y607. Residues 626 to 887 form the Protein kinase domain; that stretch reads IRIERVIGAG…QIVNTLDRLI (262 aa). ATP contacts are provided by residues 633-638, K658, and 705-711; these read GAGEFG and EYMENGS. Y706 is subject to Phosphotyrosine; by autocatalysis. D751 serves as the catalytic Proton acceptor. 755–756 is a binding site for ATP; the sequence is RN. Residues Y784 and Y927 each carry the phosphotyrosine; by autocatalysis modification. The region spanning 910–974 is the SAM domain; it reads AAVNTVEDWL…LSSIQCLQAH (65 aa). The short motif at 979–981 is the PDZ-binding element; that stretch reads VQV.

This sequence belongs to the protein kinase superfamily. Tyr protein kinase family. Ephrin receptor subfamily. In terms of assembly, heterotetramer upon binding of the ligand. The heterotetramer is composed of an ephrin dimer and a receptor dimer. Oligomerization is probably required to induce biological responses. Autophosphorylates upon activation by efna5. As to expression, widely expressed in the developing zebrafish nervous system.

The protein resides in the cell membrane. It carries out the reaction L-tyrosyl-[protein] + ATP = O-phospho-L-tyrosyl-[protein] + ADP + H(+). In terms of biological role, receptor tyrosine kinase which binds promiscuously membrane-bound ephrin family ligands residing on adjacent cells, leading to contact-dependent bidirectional signaling into neighboring cells. The signaling pathway downstream of the receptor is referred to as forward signaling while the signaling pathway downstream of the ephrin ligand is referred to as reverse signaling. Highly promiscuous for ephrin-A ligands it binds preferentially efna5. Upon activation by efna5 regulates cell-cell adhesion, cytoskeletal organization and cell migration. Plays a role in cardiac cells migration and differentiation probably through activation by efna1. Involved in the retinotectal mapping of neurons. May also control the segregation but not the guidance of motor and sensory axons during neuromuscular circuit development. This is Ephrin type-A receptor 3 (epha3) from Danio rerio (Zebrafish).